The sequence spans 234 residues: Large ribosomal subunit protein uL1c (234 aa).

Belongs to the universal ribosomal protein uL1 family. As to quaternary structure, part of the 50S ribosomal subunit.

The protein localises to the plastid. It localises to the chloroplast. Its function is as follows. Binds directly to 23S rRNA. Might be involved in E site tRNA release (Potential). This is Large ribosomal subunit protein uL1c (rpl1) from Rhodomonas salina (Cryptomonas salina).